The primary structure comprises 100 residues: Large ribosomal subunit protein uL23 (100 aa).

Belongs to the universal ribosomal protein uL23 family. In terms of assembly, part of the 50S ribosomal subunit. Contacts protein L29, and trigger factor when it is bound to the ribosome.

Functionally, one of the early assembly proteins it binds 23S rRNA. One of the proteins that surrounds the polypeptide exit tunnel on the outside of the ribosome. Forms the main docking site for trigger factor binding to the ribosome. The polypeptide is Large ribosomal subunit protein uL23 (Pectobacterium atrosepticum (strain SCRI 1043 / ATCC BAA-672) (Erwinia carotovora subsp. atroseptica)).